Consider the following 362-residue polypeptide: Chorismate synthase (362 aa).

2 residues coordinate NADP(+): Arg48 and Arg54. FMN contacts are provided by residues 125-127, 238-239, Gly278, 293-297, and Arg319; these read RSS, NA, and KPTSS.

Belongs to the chorismate synthase family. In terms of assembly, homotetramer. FMNH2 serves as cofactor.

It carries out the reaction 5-O-(1-carboxyvinyl)-3-phosphoshikimate = chorismate + phosphate. The protein operates within metabolic intermediate biosynthesis; chorismate biosynthesis; chorismate from D-erythrose 4-phosphate and phosphoenolpyruvate: step 7/7. Catalyzes the anti-1,4-elimination of the C-3 phosphate and the C-6 proR hydrogen from 5-enolpyruvylshikimate-3-phosphate (EPSP) to yield chorismate, which is the branch point compound that serves as the starting substrate for the three terminal pathways of aromatic amino acid biosynthesis. This reaction introduces a second double bond into the aromatic ring system. In Aeromonas salmonicida (strain A449), this protein is Chorismate synthase.